A 912-amino-acid chain; its full sequence is Metabotropic glutamate receptor 4 (912 aa).

A signal peptide spans 1 to 32 (MSGKGGWAWWWARLPLCLLLSLYAPWVPSSLG). At 33–587 (KPKGHPHMNS…IVKLEWDSPW (555 aa)) the chain is on the extracellular side. A disulfide bridge links cysteine 67 with cysteine 109. Asparagine 98 carries an N-linked (GlcNAc...) asparagine glycan. L-glutamate-binding positions include serine 159, 180-182 (AST), and tyrosine 230. Intrachain disulfides connect cysteine 249–cysteine 538, cysteine 372–cysteine 388, cysteine 428–cysteine 435, cysteine 520–cysteine 539, cysteine 524–cysteine 542, cysteine 545–cysteine 557, and cysteine 560–cysteine 573. An N-linked (GlcNAc...) asparagine glycan is attached at asparagine 301. Residue aspartate 312 participates in L-glutamate binding. An L-glutamate-binding site is contributed by lysine 405. Residues asparagine 454 and asparagine 484 are each glycosylated (N-linked (GlcNAc...) asparagine). The N-linked (GlcNAc...) asparagine glycan is linked to asparagine 569. A helical transmembrane segment spans residues 588–610 (AVLPLFLAVVGIAATLFVVVTFV). Topologically, residues 611–624 (RYNDTPIVKASGRE) are cytoplasmic. The helical transmembrane segment at 625-645 (LSYVLLAGIFLCYATTFLMIA) threads the bilayer. The Extracellular portion of the chain corresponds to 646–656 (EPDLGTCSLRR). The helical transmembrane segment at 657-675 (IFLGLGMSISYAALLTKTN) threads the bilayer. Topologically, residues 676–699 (RIYRIFEQGKRSVSAPRFISPASQ) are cytoplasmic. The helical transmembrane segment at 700-720 (LAITFILISLQLLGICVWFVV) threads the bilayer. Residues 721–750 (DPSHSVVDFQDQRTLDPRFARGVLKCDISD) lie on the Extracellular side of the membrane. Residues 751–772 (LSLICLLGYSMLLMVTCTVYAI) traverse the membrane as a helical segment. The Cytoplasmic portion of the chain corresponds to 773 to 785 (KTRGVPETFNEAK). The helical transmembrane segment at 786–808 (PIGFTMYTTCIVWLAFIPIFFGT) threads the bilayer. Residues 809–821 (SQSADKLYIQTTT) lie on the Extracellular side of the membrane. A helical transmembrane segment spans residues 822–847 (LTVSVSLSASVSLGMLYMPKVYIILF). Residues 848-912 (HPEQNVPKRK…TYVTYTNHAI (65 aa)) lie on the Cytoplasmic side of the membrane.

It belongs to the G-protein coupled receptor 3 family. Interacts with PICK1. As to expression, is widely distributed in the CNS. Predominant expression is seen in the granule cells of the cerebellum.

It localises to the cell membrane. Functionally, G-protein coupled receptor for glutamate. Ligand binding causes a conformation change that triggers signaling via guanine nucleotide-binding proteins (G proteins) and modulates the activity of down-stream effectors. Signaling inhibits adenylate cyclase activity. This Rattus norvegicus (Rat) protein is Metabotropic glutamate receptor 4 (Grm4).